Here is a 78-residue protein sequence, read N- to C-terminus: Large ribosomal subunit protein bL28 (78 aa).

Residues Met1–His20 form a disordered region.

Belongs to the bacterial ribosomal protein bL28 family.

This Pseudomonas fluorescens (strain ATCC BAA-477 / NRRL B-23932 / Pf-5) protein is Large ribosomal subunit protein bL28.